The primary structure comprises 199 residues: MIKKDPIELFDLWYNEVLAVSLQDKKDPTAMVLATCSKDLKPSARVVLLKKYSDQGFVFFTNMNSRKGKEMAENPSVALVFDWSRISKQVRIEGRIKMLPCNDADEYYASRPRGSQIGAWCSKQSSVLENREDFVELIKEMTIKFHEKPIPRPDYWVGIVVVPMLMEFWQEGLNRIHTRYQYTRDSNNMDKWNVVSLYP.

FMN contacts are provided by residues 45–50 (RVVLLK), 60–61 (FT), R66, K67, and Q89. Substrate is bound at residue K50. Positions 107, 111, and 115 each coordinate substrate. FMN-binding positions include 124–125 (QS) and W169. 175–177 (RIH) serves as a coordination point for substrate. Residue R179 coordinates FMN.

It belongs to the pyridoxamine 5'-phosphate oxidase family. In terms of assembly, homodimer. FMN serves as cofactor.

The enzyme catalyses pyridoxamine 5'-phosphate + O2 + H2O = pyridoxal 5'-phosphate + H2O2 + NH4(+). The catalysed reaction is pyridoxine 5'-phosphate + O2 = pyridoxal 5'-phosphate + H2O2. It functions in the pathway cofactor metabolism; pyridoxal 5'-phosphate salvage; pyridoxal 5'-phosphate from pyridoxamine 5'-phosphate: step 1/1. Its pathway is cofactor metabolism; pyridoxal 5'-phosphate salvage; pyridoxal 5'-phosphate from pyridoxine 5'-phosphate: step 1/1. Functionally, catalyzes the oxidation of either pyridoxine 5'-phosphate (PNP) or pyridoxamine 5'-phosphate (PMP) into pyridoxal 5'-phosphate (PLP). The chain is Pyridoxine/pyridoxamine 5'-phosphate oxidase from Ehrlichia chaffeensis (strain ATCC CRL-10679 / Arkansas).